The sequence spans 302 residues: Aurora/IPL1-related protein kinase 2 (302 aa).

Residues 1-17 show a composition bias toward polar residues; that stretch reads MENKPQILQTKSKNTPN. The tract at residues 1–23 is disordered; that stretch reads MENKPQILQTKSKNTPNKGGKLS. A Protein kinase domain is found at 27–277; it reads FEIGRPLGKG…LQEVKDHYWV (251 aa). ATP is bound by residues 33–41 and Lys56; that span reads LGKGKFGSV. The Proton acceptor role is filled by Asp150.

It belongs to the protein kinase superfamily. Ser/Thr protein kinase family. In terms of assembly, interacts with zen-4 and icp-1. Part of a complex containing at least air-2; icp-1; csc-1 and bir-1. Interacts with tlk-1 and bmk-1.

Its subcellular location is the cytoplasm. The protein resides in the cytoskeleton. It is found in the chromosome. The protein localises to the midbody. It carries out the reaction L-seryl-[protein] + ATP = O-phospho-L-seryl-[protein] + ADP + H(+). It catalyses the reaction L-threonyl-[protein] + ATP = O-phospho-L-threonyl-[protein] + ADP + H(+). Functionally, serine/threonine-protein kinase which mediates both meiotic and mitotic chromosome segregation. Required for histone H3 'Ser-10' phosphorylation. Phosphorylates tlk-1 and zen-4. The sequence is that of Aurora/IPL1-related protein kinase 2 (air-2) from Caenorhabditis briggsae.